Reading from the N-terminus, the 74-residue chain is MEGDLAYIGAGLAGMGTGIAALGVGNVAANFLAGALRNPSAAASQTATLFIGIAFAEALGIFSFLVALLLMFAV.

The next 2 helical transmembrane spans lie at 5 to 25 and 49 to 69; these read LAYIGAGLAGMGTGIAALGVG and LFIGIAFAEALGIFSFLVALL.

The protein belongs to the ATPase C chain family. F-type ATPases have 2 components, F(1) - the catalytic core - and F(0) - the membrane proton channel. F(1) has five subunits: alpha(3), beta(3), gamma(1), delta(1), epsilon(1). F(0) has three main subunits: a(1), b(2) and c(10-14). The alpha and beta chains form an alternating ring which encloses part of the gamma chain. F(1) is attached to F(0) by a central stalk formed by the gamma and epsilon chains, while a peripheral stalk is formed by the delta and b chains.

Its subcellular location is the cell inner membrane. F(1)F(0) ATP synthase produces ATP from ADP in the presence of a proton or sodium gradient. F-type ATPases consist of two structural domains, F(1) containing the extramembraneous catalytic core and F(0) containing the membrane proton channel, linked together by a central stalk and a peripheral stalk. During catalysis, ATP synthesis in the catalytic domain of F(1) is coupled via a rotary mechanism of the central stalk subunits to proton translocation. In terms of biological role, key component of the F(0) channel; it plays a direct role in translocation across the membrane. A homomeric c-ring of between 10-14 subunits forms the central stalk rotor element with the F(1) delta and epsilon subunits. This chain is ATP synthase subunit c, found in Ruegeria sp. (strain TM1040) (Silicibacter sp.).